A 232-amino-acid chain; its full sequence is Large ribosomal subunit protein uL1 (232 aa).

This sequence belongs to the universal ribosomal protein uL1 family. Part of the 50S ribosomal subunit.

Binds directly to 23S rRNA. The L1 stalk is quite mobile in the ribosome, and is involved in E site tRNA release. Its function is as follows. Protein L1 is also a translational repressor protein, it controls the translation of the L11 operon by binding to its mRNA. This is Large ribosomal subunit protein uL1 from Aromatoleum aromaticum (strain DSM 19018 / LMG 30748 / EbN1) (Azoarcus sp. (strain EbN1)).